A 332-amino-acid chain; its full sequence is Fructose-1,6-bisphosphatase class 1 (332 aa).

4 residues coordinate Mg(2+): glutamate 89, aspartate 110, leucine 112, and aspartate 113. Residues 113–116 (DGSS), asparagine 206, tyrosine 239, 257–259 (YLY), and lysine 269 contribute to the substrate site. Glutamate 275 provides a ligand contact to Mg(2+).

This sequence belongs to the FBPase class 1 family. Homotetramer. Mg(2+) is required as a cofactor.

The protein resides in the cytoplasm. The enzyme catalyses beta-D-fructose 1,6-bisphosphate + H2O = beta-D-fructose 6-phosphate + phosphate. It participates in carbohydrate biosynthesis; gluconeogenesis. The sequence is that of Fructose-1,6-bisphosphatase class 1 from Salmonella gallinarum (strain 287/91 / NCTC 13346).